The sequence spans 246 residues: MSSLSAAYQNLAPRKDGAPAVILFSGGLDSTTVLALAKDLGYTPYALSVGYGQRHSSELAAAKHIAKQIGVARHEVVNLDLTRFGGSALTDSSIAVPTTPGKDQEIPVTYVPARNTILLSLALGWAESLGGLDVFYGANSVDYSGYPDCRPEYVASFETMANLATKAGVEAINNENRFRVHAPIISLTKAEIIQLGSTLGVDYSQTVSCYQANDLGEACGECESCRLRQIGFKQANVIDPTRYQKK.

24 to 34 contributes to the ATP binding site; the sequence is FSGGLDSTTVL. The Zn(2+) site is built by Cys209, Cys219, Cys222, and Cys225.

This sequence belongs to the QueC family. Requires Zn(2+) as cofactor.

It catalyses the reaction 7-carboxy-7-deazaguanine + NH4(+) + ATP = 7-cyano-7-deazaguanine + ADP + phosphate + H2O + H(+). It functions in the pathway purine metabolism; 7-cyano-7-deazaguanine biosynthesis. In terms of biological role, catalyzes the ATP-dependent conversion of 7-carboxy-7-deazaguanine (CDG) to 7-cyano-7-deazaguanine (preQ(0)). This is 7-cyano-7-deazaguanine synthase from Polynucleobacter asymbioticus (strain DSM 18221 / CIP 109841 / QLW-P1DMWA-1) (Polynucleobacter necessarius subsp. asymbioticus).